Here is a 488-residue protein sequence, read N- to C-terminus: Ribulose bisphosphate carboxylase large chain (488 aa).

Residues asparagine 127 and threonine 177 each coordinate substrate. Lysine 179 (proton acceptor) is an active-site residue. Lysine 181 provides a ligand contact to substrate. Mg(2+) contacts are provided by lysine 205, aspartate 207, and glutamate 208. Lysine 205 is subject to N6-carboxylysine. The active-site Proton acceptor is the histidine 297. Residues arginine 298, histidine 330, and serine 382 each contribute to the substrate site.

This sequence belongs to the RuBisCO large chain family. Type I subfamily. Heterohexadecamer of 8 large chains and 8 small chains. Requires Mg(2+) as cofactor.

It localises to the plastid. The protein resides in the chloroplast. It carries out the reaction 2 (2R)-3-phosphoglycerate + 2 H(+) = D-ribulose 1,5-bisphosphate + CO2 + H2O. The enzyme catalyses D-ribulose 1,5-bisphosphate + O2 = 2-phosphoglycolate + (2R)-3-phosphoglycerate + 2 H(+). In terms of biological role, ruBisCO catalyzes two reactions: the carboxylation of D-ribulose 1,5-bisphosphate, the primary event in carbon dioxide fixation, as well as the oxidative fragmentation of the pentose substrate in the photorespiration process. Both reactions occur simultaneously and in competition at the same active site. The chain is Ribulose bisphosphate carboxylase large chain (rbcL) from Porphyra umbilicalis (Purple laver).